The chain runs to 297 residues: Acetylglutamate kinase (297 aa).

Residues 70-71, Arg92, and Asn194 each bind substrate; that span reads GG.

This sequence belongs to the acetylglutamate kinase family. ArgB subfamily.

It is found in the cytoplasm. It carries out the reaction N-acetyl-L-glutamate + ATP = N-acetyl-L-glutamyl 5-phosphate + ADP. Its pathway is amino-acid biosynthesis; L-arginine biosynthesis; N(2)-acetyl-L-ornithine from L-glutamate: step 2/4. Its function is as follows. Catalyzes the ATP-dependent phosphorylation of N-acetyl-L-glutamate. The chain is Acetylglutamate kinase from Janthinobacterium sp. (strain Marseille) (Minibacterium massiliensis).